The chain runs to 357 residues: UDP-N-acetylglucosamine--N-acetylmuramyl-(pentapeptide) pyrophosphoryl-undecaprenol N-acetylglucosamine transferase (357 aa).

Residues 13–15 (SAG), arginine 166, serine 196, and glutamine 291 contribute to the UDP-N-acetyl-alpha-D-glucosamine site.

The protein belongs to the glycosyltransferase 28 family. MurG subfamily.

The protein resides in the cell membrane. The catalysed reaction is di-trans,octa-cis-undecaprenyl diphospho-N-acetyl-alpha-D-muramoyl-L-alanyl-D-glutamyl-meso-2,6-diaminopimeloyl-D-alanyl-D-alanine + UDP-N-acetyl-alpha-D-glucosamine = di-trans,octa-cis-undecaprenyl diphospho-[N-acetyl-alpha-D-glucosaminyl-(1-&gt;4)]-N-acetyl-alpha-D-muramoyl-L-alanyl-D-glutamyl-meso-2,6-diaminopimeloyl-D-alanyl-D-alanine + UDP + H(+). It functions in the pathway cell wall biogenesis; peptidoglycan biosynthesis. Its function is as follows. Cell wall formation. Catalyzes the transfer of a GlcNAc subunit on undecaprenyl-pyrophosphoryl-MurNAc-pentapeptide (lipid intermediate I) to form undecaprenyl-pyrophosphoryl-MurNAc-(pentapeptide)GlcNAc (lipid intermediate II). The sequence is that of UDP-N-acetylglucosamine--N-acetylmuramyl-(pentapeptide) pyrophosphoryl-undecaprenol N-acetylglucosamine transferase from Clostridium perfringens (strain SM101 / Type A).